We begin with the raw amino-acid sequence, 233 residues long: MSAAGRRGLIVAIDGPSGAGKSTITKLLADRLGYIHIDTGAMFRTVALAASRAGIAPDNDASLAGLCADLEIAFVRNNGCCRVTANGEDVTDAIRTPAISALTSAISARKVVRDVLLRLQRHMAREGGVILEGRDIGTVVFPDADVKFFLSASVEERGRRRYLELKAKGQEVSLDETIAAVARRDEQDSGREHAPLRRADDAVDIDSTGLSIEEVLDRMESIVRERERATPGA.

15-23 (GPSGAGKST) contributes to the ATP binding site. The span at 183–201 (RRDEQDSGREHAPLRRADD) shows a compositional bias: basic and acidic residues. The interval 183–202 (RRDEQDSGREHAPLRRADDA) is disordered.

It belongs to the cytidylate kinase family. Type 1 subfamily.

The protein resides in the cytoplasm. The enzyme catalyses CMP + ATP = CDP + ADP. It carries out the reaction dCMP + ATP = dCDP + ADP. In Geobacter sulfurreducens (strain ATCC 51573 / DSM 12127 / PCA), this protein is Cytidylate kinase.